An 85-amino-acid chain; its full sequence is HssA/B-like protein 62 (85 aa).

Belongs to the hssA/B family.

This is HssA/B-like protein 62 (hssl62) from Dictyostelium discoideum (Social amoeba).